A 161-amino-acid polypeptide reads, in one-letter code: Probable endopeptidase HI_1314 (161 aa).

An N-terminal signal peptide occupies residues 1-18 (MKVYKSFLIATASLFLFA). Residue Cys19 is the site of N-palmitoyl cysteine attachment. Cys19 carries the S-diacylglycerol cysteine lipid modification. A NlpC/P60 domain is found at 39-161 (IMAIAMLSEQ…SKAFWQVRRI (123 aa)). The active-site Nucleophile is the Cys69. His122 (proton acceptor) is an active-site residue. The active site involves His134.

This sequence belongs to the peptidase C40 family.

It is found in the cell membrane. The chain is Probable endopeptidase HI_1314 from Haemophilus influenzae (strain ATCC 51907 / DSM 11121 / KW20 / Rd).